Consider the following 429-residue polypeptide: D-amino acid dehydrogenase (429 aa).

3-17 is a binding site for FAD; it reads VLILGSGVIGVTSAW.

It belongs to the DadA oxidoreductase family. FAD is required as a cofactor.

The catalysed reaction is a D-alpha-amino acid + A + H2O = a 2-oxocarboxylate + AH2 + NH4(+). Oxidative deamination of D-amino acids. This Xanthomonas axonopodis pv. citri (strain 306) protein is D-amino acid dehydrogenase.